Reading from the N-terminus, the 1036-residue chain is uncharacterized protein (1036 aa).

The first 24 residues, 1–24 (MKRVGLIGVIMAALLVISATPVMA), serve as a signal peptide directing secretion. Residues 1011–1033 (GGGVPGFEAVFAIAGLLAVAYLL) traverse the membrane as a helical segment.

It localises to the membrane. This is an uncharacterized protein from Archaeoglobus fulgidus (strain ATCC 49558 / DSM 4304 / JCM 9628 / NBRC 100126 / VC-16).